A 463-amino-acid chain; its full sequence is uncharacterized protein (463 aa).

Residues 1–23 form the signal peptide; that stretch reads MKFSSIPIASTLLSLLVASSVTA. Disordered regions lie at residues 174-200 and 239-258; these read STYN…TKAS and GAST…QRKN.

The protein belongs to the but2 family.

The protein localises to the cytoplasm. This is an uncharacterized protein from Schizosaccharomyces pombe (strain 972 / ATCC 24843) (Fission yeast).